Here is a 476-residue protein sequence, read N- to C-terminus: Ribulose bisphosphate carboxylase large chain (476 aa).

The substrate site is built by Asn124 and Thr174. Lys176 functions as the Proton acceptor in the catalytic mechanism. Lys178 is a binding site for substrate. Mg(2+)-binding residues include Lys202, Asp204, and Glu205. Lys202 carries the post-translational modification N6-carboxylysine. Residue His295 is the Proton acceptor of the active site. Substrate is bound by residues Arg296, His328, and Ser380.

This sequence belongs to the RuBisCO large chain family. Type I subfamily. Heterohexadecamer of 8 large chains and 8 small chains; disulfide-linked. The disulfide link is formed within the large subunit homodimers. Forms complexes of many stoichiometries with Raf1 with and without RbcS. RuBisCO interacts with the C-terminus of CcmM. The cofactor is Mg(2+). The disulfide bond which can form in the large chain dimeric partners within the hexadecamer appears to be associated with oxidative stress and protein turnover.

Its subcellular location is the carboxysome. It carries out the reaction 2 (2R)-3-phosphoglycerate + 2 H(+) = D-ribulose 1,5-bisphosphate + CO2 + H2O. The enzyme catalyses D-ribulose 1,5-bisphosphate + O2 = 2-phosphoglycolate + (2R)-3-phosphoglycerate + 2 H(+). Functionally, ruBisCO catalyzes two reactions: the carboxylation of D-ribulose 1,5-bisphosphate, the primary event in carbon dioxide fixation, as well as the oxidative fragmentation of the pentose substrate in the photorespiration process. Both reactions occur simultaneously and in competition at the same active site. This is Ribulose bisphosphate carboxylase large chain from Nostoc sp. (strain PCC 7120 / SAG 25.82 / UTEX 2576).